The primary structure comprises 559 residues: Dihydroxy-acid dehydratase (559 aa).

A Mg(2+)-binding site is contributed by D78. C119 provides a ligand contact to [2Fe-2S] cluster. Residues D120 and K121 each coordinate Mg(2+). Residue K121 is modified to N6-carboxylysine. Residue C192 participates in [2Fe-2S] cluster binding. E446 is a Mg(2+) binding site. Residue S472 is the Proton acceptor of the active site.

It belongs to the IlvD/Edd family. In terms of assembly, homodimer. The cofactor is [2Fe-2S] cluster. Mg(2+) serves as cofactor.

The enzyme catalyses (2R)-2,3-dihydroxy-3-methylbutanoate = 3-methyl-2-oxobutanoate + H2O. The catalysed reaction is (2R,3R)-2,3-dihydroxy-3-methylpentanoate = (S)-3-methyl-2-oxopentanoate + H2O. The protein operates within amino-acid biosynthesis; L-isoleucine biosynthesis; L-isoleucine from 2-oxobutanoate: step 3/4. It functions in the pathway amino-acid biosynthesis; L-valine biosynthesis; L-valine from pyruvate: step 3/4. Functions in the biosynthesis of branched-chain amino acids. Catalyzes the dehydration of (2R,3R)-2,3-dihydroxy-3-methylpentanoate (2,3-dihydroxy-3-methylvalerate) into 2-oxo-3-methylpentanoate (2-oxo-3-methylvalerate) and of (2R)-2,3-dihydroxy-3-methylbutanoate (2,3-dihydroxyisovalerate) into 2-oxo-3-methylbutanoate (2-oxoisovalerate), the penultimate precursor to L-isoleucine and L-valine, respectively. This Wolinella succinogenes (strain ATCC 29543 / DSM 1740 / CCUG 13145 / JCM 31913 / LMG 7466 / NCTC 11488 / FDC 602W) (Vibrio succinogenes) protein is Dihydroxy-acid dehydratase.